We begin with the raw amino-acid sequence, 140 residues long: Nucleoside diphosphate kinase (140 aa).

Positions 10, 58, 86, 92, 103, and 113 each coordinate ATP. H116 (pros-phosphohistidine intermediate) is an active-site residue.

Belongs to the NDK family. In terms of assembly, homotetramer. The cofactor is Mg(2+).

It localises to the cytoplasm. The catalysed reaction is a 2'-deoxyribonucleoside 5'-diphosphate + ATP = a 2'-deoxyribonucleoside 5'-triphosphate + ADP. The enzyme catalyses a ribonucleoside 5'-diphosphate + ATP = a ribonucleoside 5'-triphosphate + ADP. Functionally, major role in the synthesis of nucleoside triphosphates other than ATP. The ATP gamma phosphate is transferred to the NDP beta phosphate via a ping-pong mechanism, using a phosphorylated active-site intermediate. The polypeptide is Nucleoside diphosphate kinase (Anaplasma phagocytophilum (strain HZ)).